A 75-amino-acid polypeptide reads, in one-letter code: Small capsomere-interacting protein (75 aa).

This sequence belongs to the herpesviridae small capsomere-interacting protein family. Interacts with the major capsid protein/MCP.

It is found in the virion. The protein localises to the host nucleus. Its function is as follows. Participates in the assembly of the infectious particles by decorating the outer surface of the capsid shell and thus forming a layer between the capsid and the tegument. Complexes composed of the major capsid protein and small capsomere-interacting protein/SCP assemble together in the host cytoplasm and are translocated to the nucleus, where they accumulate and participate in capsid assembly. The chain is Small capsomere-interacting protein from Homo sapiens (Human).